The sequence spans 141 residues: ATP synthase epsilon chain (141 aa).

The protein belongs to the ATPase epsilon chain family. In terms of assembly, F-type ATPases have 2 components, CF(1) - the catalytic core - and CF(0) - the membrane proton channel. CF(1) has five subunits: alpha(3), beta(3), gamma(1), delta(1), epsilon(1). CF(0) has three main subunits: a, b and c.

It localises to the cell inner membrane. Functionally, produces ATP from ADP in the presence of a proton gradient across the membrane. The chain is ATP synthase epsilon chain from Paraburkholderia phytofirmans (strain DSM 17436 / LMG 22146 / PsJN) (Burkholderia phytofirmans).